We begin with the raw amino-acid sequence, 982 residues long: Chromosome partition protein Smc (982 aa).

33–40 (PNGSGKSN) provides a ligand contact to ATP. Coiled coils occupy residues 171 to 235 (RYTK…LVAD) and 263 to 377 (QLQL…NLNQ). Residues 416–535 (TGLLNTLNTF…ASDLQAALKL (120 aa)) enclose the SMC hinge domain. Coiled coils occupy residues 568–627 (LSLY…ERVN), 669–713 (AERD…RSQL), and 753–818 (IKLS…EIDE).

The protein belongs to the SMC family. Homodimer.

It localises to the cytoplasm. Required for chromosome condensation and partitioning. This Mycoplasma pneumoniae (strain ATCC 29342 / M129 / Subtype 1) (Mycoplasmoides pneumoniae) protein is Chromosome partition protein Smc.